A 99-amino-acid chain; its full sequence is Regulatory protein FanB (99 aa).

Trans-acting protein involved in the regulation of the biogenesis of K99 fimbriae (FanC). The polypeptide is Regulatory protein FanB (fanB) (Escherichia coli).